The primary structure comprises 871 residues: CRISPR system Cmr subunit Cmr2 (871 aa).

Positions 1 to 215 (MVNIKEKLFV…THLDLTSALS (215 aa)) are not required for target RNA cleavage. Residues histidine 13, aspartate 14, and histidine 25 each contribute to the Mn(2+) site. Zn(2+)-binding residues include cysteine 448, cysteine 451, cysteine 478, and cysteine 481. The region spanning 592-752 (KYYAILVMDG…GKDTLAIGLL (161 aa)) is the GGDEF domain. Positions 600, 656, 673, 674, 694, and 700 each coordinate Mn(2+).

This sequence belongs to the CRISPR system Cmr2 family. As to quaternary structure, part of the type III-B Cmr ribonucleoprotein (RNP) complex, an elongated RNP with Cmr2 and Cmr3 as the base, with Cmr4 and Cmr5 forming a helical core along the mature crRNA (39 or 45 nt in length), while the complex is capped by Cmr6 and Cmr1. The 5' end of the crRNA is bound to Cmr2 and Cmr3, while Cmr6 and a Cmr1 subunit (Cmr1-1 or Cmr1-2) cap the 3' end of the crRNA. The target RNA lies antiparallel to the crRNA, with its 5' end near Cmr1 and Cmr6 and its 3' end near Cmr2 and Cmr3; major target cleavage occurs nears the junction of Cmr1/Cmr6 and Cmr4/Cmr, with minor cleavage occurring at 6 nt intervals which coincide with the proposed spacing of Cmr4 subunits. Forms a 1:1 complex with Cmr3. The Cmr2-Cmr3 complex non-specifically binds ss-target RNA and crRNA. Interacts with Cmr3, Cmr4 and Cmr5. The cofactor is Ca(2+). Mn(2+) serves as cofactor. Zn(2+) is required as a cofactor.

The protein resides in the cytoplasm. In terms of biological role, CRISPR (clustered regularly interspaced short palindromic repeat), is an adaptive immune system that provides protection against mobile genetic elements (viruses, transposable elements and conjugative plasmids). CRISPR clusters contain sequences complementary to antecedent mobile elements and target invading nucleic acids. CRISPR clusters are transcribed and processed into CRISPR RNA (crRNA), formerly called psiRNA (prokaryotic silencing) in this organism. Part of the Cmr ribonucleoprotein complex which has divalent cation-dependent endoribonuclease activity specific for ssRNA complementary to the crRNA (target RNA), generating 5' hydroxy- and 3' phosphate or 2'-3' cyclic phosphate termini. Cmr4 is probably the subunit that cleaves target RNA. Cmr complex does not cleave ssDNA complementary to the crRNA. Cleavage of target RNA is guided by the crRNA; substrate cleavage occurs a fixed distance (14 nt) from the 3' end of the crRNA. In vitro reconstitution shows Cmr1-2 and Cmr5 are not absolutely necessary for target cleavage. The chain is CRISPR system Cmr subunit Cmr2 from Pyrococcus furiosus (strain ATCC 43587 / DSM 3638 / JCM 8422 / Vc1).